We begin with the raw amino-acid sequence, 92 residues long: Progonadoliberin-1 (92 aa).

The signal sequence occupies residues 1–23 (MEKSRKILVGVLLFTASVAICLA). Position 24 is a pyrrolidone carboxylic acid (glutamine 24). The residue at position 33 (glycine 33) is a Glycine amide.

The protein belongs to the GnRH family.

It localises to the secreted. Stimulates the secretion of gonadotropins. The chain is Progonadoliberin-1 (GNRH1) from Gallus gallus (Chicken).